A 351-amino-acid chain; its full sequence is Auxin efflux carrier component 5 (351 aa).

Helical transmembrane passes span 7–27 (VYKV…GYGS), 39–59 (CDAI…IEFT), 71–91 (FIAA…LWAK), 100–120 (WSIT…GVPL), 132–152 (LVVQ…LFVL), 210–230 (ILGI…PGIL), 234–254 (ILIM…IFMA), 271–291 (MVLK…VLGL), 295–315 (VLRV…FIFA), and 329–349 (VIFG…ALEF).

Belongs to the auxin efflux carrier (TC 2.A.69.1) family. As to expression, expressed in elongating parts of hypocotyl, cotyledon vasculature and guard cells. Detected in root pericycle and root tip and at later developmental stages in leaves, stems and flowers. Expressed in veins of mature leaves.

The protein localises to the endoplasmic reticulum membrane. The protein resides in the cell membrane. In terms of biological role, auxin transporter regulating intracellular auxin homeostasis and metabolism. Mediates the auxin transport from the cytosol into the lumen of the endoplasmic reticulum. May also act as an auxin efflux carrier when located to the cell membrane. PIN5 and PIN8 may have an antagonistic/compensatory activity. Involved in unfolded protein response (UPR) activation. Involved in the control of vein patterning. Promotes vein formation. PIN5, PIN6, and PIN8 control vein network geometry, but they are expressed in mutually exclusive domains of leaf vascular cells. The chain is Auxin efflux carrier component 5 from Arabidopsis thaliana (Mouse-ear cress).